The primary structure comprises 511 residues: Probable cytochrome P450 4ac2 (511 aa).

Heme contacts are provided by glutamate 318 and cysteine 455.

It belongs to the cytochrome P450 family. The cofactor is heme.

The protein localises to the endoplasmic reticulum membrane. The protein resides in the microsome membrane. May be involved in the metabolism of insect hormones and in the breakdown of synthetic insecticides. In Drosophila melanogaster (Fruit fly), this protein is Probable cytochrome P450 4ac2 (Cyp4ac2).